The chain runs to 265 residues: MAERSAPVGVMDSGVGGLSVLAEIQRLLPNETLLYVADCGHVPYGEKSPDYIRQRCRHIAGFFHEQGAKAMVLACNTATVAAVADLRELYPTWPLVGMEPAVKPAAAATRSGVVGVLATTGTLQSAKFAALLDRFANDVQVITQPCPGLVELIETGDLTSPVLRQMLWGYVQPLLAAGCDTLILGCTHYPFLRPLLAGMVPADVAVIDTGAAVARQLQRLLGANDLLAEGPAGDARFWTSADPEILRKILPVLWHKCGDVQSFAL.

Residues 12–13 and 44–45 each bind substrate; these read DS and YG. Catalysis depends on Cys-75, which acts as the Proton donor/acceptor. A substrate-binding site is contributed by 76 to 77; sequence NT. Cys-186 functions as the Proton donor/acceptor in the catalytic mechanism. Position 187 to 188 (187 to 188) interacts with substrate; sequence TH.

Belongs to the aspartate/glutamate racemases family.

The catalysed reaction is L-glutamate = D-glutamate. It functions in the pathway cell wall biogenesis; peptidoglycan biosynthesis. Provides the (R)-glutamate required for cell wall biosynthesis. The protein is Glutamate racemase of Pseudomonas putida (strain GB-1).